Consider the following 92-residue polypeptide: Large ribosomal subunit protein bL25 (92 aa).

It belongs to the bacterial ribosomal protein bL25 family. In terms of assembly, part of the 50S ribosomal subunit; part of the 5S rRNA/L5/L18/L25 subcomplex. Contacts the 5S rRNA. Binds to the 5S rRNA independently of L5 and L18.

Functionally, this is one of the proteins that binds to the 5S RNA in the ribosome where it forms part of the central protuberance. This is Large ribosomal subunit protein bL25 from Aliivibrio salmonicida (strain LFI1238) (Vibrio salmonicida (strain LFI1238)).